The primary structure comprises 49 residues: Large ribosomal subunit protein bL33B (49 aa).

This sequence belongs to the bacterial ribosomal protein bL33 family.

In Bacillus anthracis, this protein is Large ribosomal subunit protein bL33B.